An 82-amino-acid chain; its full sequence is uncharacterized protein (82 aa).

2 helical membrane passes run 8-28 (LTTAAGILLMAFLSCLLLPAP) and 50-70 (LYTLLFCLWFLVLGAIEYFVL).

It localises to the cell membrane. This is an uncharacterized protein from Escherichia coli (strain K12).